We begin with the raw amino-acid sequence, 143 residues long: MKVKIINKSNNPLPKYSTIGSSGMDLRAYTENDITLKPLERTLIPTGIYISIPEGYEIQIRPRSGLSIKHGITLINCVGTIDSDYRGEIKIPVVNLSNEEYTISTGDRICQMILQKYENIEFAEVEVLDETDRNDGGFGHTGY.

Substrate-binding positions include 63 to 65 (RSG), asparagine 76, 80 to 82 (TID), and lysine 90.

The protein belongs to the dUTPase family. Mg(2+) serves as cofactor.

The catalysed reaction is dUTP + H2O = dUMP + diphosphate + H(+). The protein operates within pyrimidine metabolism; dUMP biosynthesis; dUMP from dCTP (dUTP route): step 2/2. In terms of biological role, this enzyme is involved in nucleotide metabolism: it produces dUMP, the immediate precursor of thymidine nucleotides and it decreases the intracellular concentration of dUTP so that uracil cannot be incorporated into DNA. The protein is Deoxyuridine 5'-triphosphate nucleotidohydrolase of Finegoldia magna (strain ATCC 29328 / DSM 20472 / WAL 2508) (Peptostreptococcus magnus).